Reading from the N-terminus, the 466-residue chain is Tryptophan synthase beta chain 2, chloroplastic (466 aa).

Lysine 161 carries the N6-(pyridoxal phosphate)lysine modification.

The protein belongs to the TrpB family. In terms of assembly, tetramer of two alpha and two beta chains. Requires pyridoxal 5'-phosphate as cofactor.

It is found in the plastid. It localises to the chloroplast. The catalysed reaction is (1S,2R)-1-C-(indol-3-yl)glycerol 3-phosphate + L-serine = D-glyceraldehyde 3-phosphate + L-tryptophan + H2O. It participates in amino-acid biosynthesis; L-tryptophan biosynthesis; L-tryptophan from chorismate: step 5/5. Its function is as follows. The beta subunit is responsible for the synthesis of L-tryptophan from indole and L-serine. The sequence is that of Tryptophan synthase beta chain 2, chloroplastic (TSB) from Camptotheca acuminata (Happy tree).